A 90-amino-acid polypeptide reads, in one-letter code: Bombyxin B-3 (90 aa).

A signal peptide spans 1–20 (MMKTTIMFMLVVVISLTYSS). 3 disulfides stabilise this stretch: Cys-30–Cys-76, Cys-42–Cys-89, and Cys-75–Cys-80. Residues 49-67 (SGAQYAPYFWTRQYLGSRG) constitute a propeptide, c peptide like.

The protein belongs to the insulin family. In terms of assembly, heterodimer of a B chain and an A chain linked by two disulfide bonds.

It localises to the secreted. Functionally, brain peptide responsible for activation of prothoracic glands to produce ecdysone in insects. The sequence is that of Bombyxin B-3 (BBXB3) from Bombyx mori (Silk moth).